A 574-amino-acid polypeptide reads, in one-letter code: K(+)/H(+) antiporter NhaP2 (574 aa).

The next 13 helical transmembrane spans lie at 6 to 26, 30 to 50, 58 to 78, 87 to 107, 109 to 129, 173 to 193, 196 to 216, 219 to 239, 242 to 262, 271 to 291, 299 to 319, 335 to 355, and 359 to 379; these read INSF…LSPM, LGIP…EDGL, YSTA…DGGM, VALW…TSIT, LMAA…GAIV, IAIL…VSFI, FGLG…LVNL, LAEG…YAVS, LGGS…NKPT, VLDG…GLLL, ILLP…PLAV, WFIS…VFPM, and LPGA…SLLI. Positions 405-486 constitute an RCK C-terminal domain; sequence SGVEIYPSSE…LDALSHLFSQ (82 aa).

It belongs to the monovalent cation:proton antiporter 1 (CPA1) transporter (TC 2.A.36) family. NhaP2 subfamily.

It localises to the cell inner membrane. The enzyme catalyses K(+)(in) + H(+)(out) = K(+)(out) + H(+)(in). Its function is as follows. K(+)/H(+) antiporter that extrudes potassium in exchange for external protons and maintains the internal concentration of potassium under toxic levels. The sequence is that of K(+)/H(+) antiporter NhaP2 from Shewanella sp. (strain W3-18-1).